The sequence spans 388 residues: NADH-quinone oxidoreductase subunit D 2 (388 aa).

This sequence belongs to the complex I 49 kDa subunit family. In terms of assembly, NDH-1 is composed of 14 different subunits. Subunits NuoB, C, D, E, F, and G constitute the peripheral sector of the complex.

It is found in the cell inner membrane. The enzyme catalyses a quinone + NADH + 5 H(+)(in) = a quinol + NAD(+) + 4 H(+)(out). In terms of biological role, NDH-1 shuttles electrons from NADH, via FMN and iron-sulfur (Fe-S) centers, to quinones in the respiratory chain. The immediate electron acceptor for the enzyme in this species is believed to be ubiquinone. Couples the redox reaction to proton translocation (for every two electrons transferred, four hydrogen ions are translocated across the cytoplasmic membrane), and thus conserves the redox energy in a proton gradient. The sequence is that of NADH-quinone oxidoreductase subunit D 2 from Sorangium cellulosum (strain So ce56) (Polyangium cellulosum (strain So ce56)).